We begin with the raw amino-acid sequence, 219 residues long: Phosphate-specific transport system accessory protein PhoU homolog (219 aa).

The protein belongs to the PhoU family. As to quaternary structure, homodimer.

The protein localises to the cytoplasm. Functionally, plays a role in the regulation of phosphate uptake. Encoded together with proteins of the phosphate-specific transport (Pst) system in the polycistronic pstSCAB-phoU operon. This Clostridium acetobutylicum (strain ATCC 824 / DSM 792 / JCM 1419 / IAM 19013 / LMG 5710 / NBRC 13948 / NRRL B-527 / VKM B-1787 / 2291 / W) protein is Phosphate-specific transport system accessory protein PhoU homolog.